We begin with the raw amino-acid sequence, 72 residues long: Hypertrehalosaemic prohormone (72 aa).

The signal sequence occupies residues 1 to 21; that stretch reads MNHLVKVLIVVVAIALVLCEA. A Pyrrolidone carboxylic acid modification is found at Gln22. The residue at position 31 (Thr31) is a Threonine amide.

It belongs to the AKH/HRTH/RPCH family. In terms of tissue distribution, expressed in corpora cardiaca.

It localises to the secreted. Hypertrehalosaemic factors are neuropeptides that elevate the level of trehalose in the hemolymph (trehalose is the major carbohydrate in the hemolymph of insects). In Blaberus discoidalis (Tropical cockroach), this protein is Hypertrehalosaemic prohormone.